Consider the following 30-residue polypeptide: Protamine-YII (30 aa).

The disordered stretch occupies residues 1–30; it reads PRRRTRRASRPVRRRRPRRVSRRRRARRRR.

Testis.

The protein resides in the nucleus. Its subcellular location is the chromosome. Functionally, protamines substitute for histones in the chromatin of sperm during the haploid phase of spermatogenesis. They compact sperm DNA into a highly condensed, stable and inactive complex. The sequence is that of Protamine-YII from Clupea harengus (Atlantic herring).